The primary structure comprises 121 residues: Ribonuclease P protein component (121 aa).

It belongs to the RnpA family. As to quaternary structure, consists of a catalytic RNA component (M1 or rnpB) and a protein subunit.

It catalyses the reaction Endonucleolytic cleavage of RNA, removing 5'-extranucleotides from tRNA precursor.. Its function is as follows. RNaseP catalyzes the removal of the 5'-leader sequence from pre-tRNA to produce the mature 5'-terminus. It can also cleave other RNA substrates such as 4.5S RNA. The protein component plays an auxiliary but essential role in vivo by binding to the 5'-leader sequence and broadening the substrate specificity of the ribozyme. In Geobacillus kaustophilus (strain HTA426), this protein is Ribonuclease P protein component.